The sequence spans 317 residues: Porphobilinogen deaminase (317 aa).

Position 245 is an S-(dipyrrolylmethanemethyl)cysteine (Cys-245).

It belongs to the HMBS family. In terms of assembly, monomer. It depends on dipyrromethane as a cofactor.

The catalysed reaction is 4 porphobilinogen + H2O = hydroxymethylbilane + 4 NH4(+). It functions in the pathway porphyrin-containing compound metabolism; protoporphyrin-IX biosynthesis; coproporphyrinogen-III from 5-aminolevulinate: step 2/4. It participates in porphyrin-containing compound metabolism; chlorophyll biosynthesis. Its function is as follows. Tetrapolymerization of the monopyrrole PBG into the hydroxymethylbilane pre-uroporphyrinogen in several discrete steps. This Synechococcus sp. (strain RCC307) protein is Porphobilinogen deaminase.